Reading from the N-terminus, the 326-residue chain is UDP-N-acetylglucosamine transporter (326 aa).

The next 8 membrane-spanning stretches (helical) occupy residues 8–24, 42–58, 138–154, 174–190, 210–226, 247–263, 269–285, and 296–312; these read LSLG…VLTM, AVVV…ILLV, VYQW…VAFV, FVGL…SGFA, IQLG…GVYI, IVVI…AAVI, ILKG…STLI, and TSVF…ATFL.

The protein belongs to the nucleotide-sugar transporter family. SLC35A subfamily. As to quaternary structure, interacts with SLC35A2; the interaction is reduced in the presence of SLC35A4. Found in a complex with SLC35A2 and SLC35A4.

The protein resides in the golgi apparatus membrane. Its function is as follows. Uridine diphosphate-N-acetylglucosamine (UDP-GlcNAc) transporter in the Golgi apparatus. May supply UDP-GlcNAc as substrate for Golgi-resident glycosyltransferases that generate branching of diantennary oligosaccharides. The polypeptide is UDP-N-acetylglucosamine transporter (SLC35A3) (Canis lupus familiaris (Dog)).